A 342-amino-acid chain; its full sequence is L-threonine 3-dehydrogenase (342 aa).

C38 contributes to the Zn(2+) binding site. Catalysis depends on charge relay system residues T40 and H43. Positions 63, 64, 93, 96, 99, and 107 each coordinate Zn(2+). NAD(+)-binding positions include I175, D195, R200, 262 to 264 (LGI), and 286 to 287 (IY).

It belongs to the zinc-containing alcohol dehydrogenase family. In terms of assembly, homotetramer. Requires Zn(2+) as cofactor.

The protein localises to the cytoplasm. The catalysed reaction is L-threonine + NAD(+) = (2S)-2-amino-3-oxobutanoate + NADH + H(+). It functions in the pathway amino-acid degradation; L-threonine degradation via oxydo-reductase pathway; glycine from L-threonine: step 1/2. Its function is as follows. Catalyzes the NAD(+)-dependent oxidation of L-threonine to 2-amino-3-ketobutyrate. In Burkholderia lata (strain ATCC 17760 / DSM 23089 / LMG 22485 / NCIMB 9086 / R18194 / 383), this protein is L-threonine 3-dehydrogenase.